Reading from the N-terminus, the 111-residue chain is Nucleoid-associated protein CYA_1369 (111 aa).

The protein belongs to the YbaB/EbfC family. In terms of assembly, homodimer.

The protein localises to the cytoplasm. The protein resides in the nucleoid. Functionally, binds to DNA and alters its conformation. May be involved in regulation of gene expression, nucleoid organization and DNA protection. The protein is Nucleoid-associated protein CYA_1369 of Synechococcus sp. (strain JA-3-3Ab) (Cyanobacteria bacterium Yellowstone A-Prime).